We begin with the raw amino-acid sequence, 206 residues long: Small ribosomal subunit protein uS4 (206 aa).

In terms of domain architecture, S4 RNA-binding spans 96-158 (GRLDNVVYRM…AKQQTRIKAA (63 aa)).

The protein belongs to the universal ribosomal protein uS4 family. As to quaternary structure, part of the 30S ribosomal subunit. Contacts protein S5. The interaction surface between S4 and S5 is involved in control of translational fidelity.

Its function is as follows. One of the primary rRNA binding proteins, it binds directly to 16S rRNA where it nucleates assembly of the body of the 30S subunit. Functionally, with S5 and S12 plays an important role in translational accuracy. This Vibrio vulnificus (strain CMCP6) protein is Small ribosomal subunit protein uS4.